We begin with the raw amino-acid sequence, 463 residues long: uncharacterized protein (463 aa).

Helical transmembrane passes span 17 to 37, 40 to 60, 97 to 117, 122 to 142, 153 to 173, 201 to 221, 244 to 264, 278 to 298, 335 to 355, 357 to 377, 401 to 421, and 429 to 449; these read ISLM…SASA, LAGP…FFIM, WFLW…YMGF, VPNW…NFLA, FALI…LMII, GVLL…MIGV, ILIF…WQEI, VGIP…ALSS, AVLA…VVPA, VFTW…AIIL, LFPF…ILMA, and AVII…GKGF.

This sequence belongs to the amino acid-polyamine-organocation (APC) superfamily.

The protein localises to the cell membrane. This is an uncharacterized protein from Bacillus subtilis (strain 168).